The following is a 1398-amino-acid chain: Pyrolysin (1398 aa).

The first 26 residues, 1-26 (MNKKGLTVLFIAIMLLSVVPVHFVSA), serve as a signal peptide directing secretion. Residues 27 to 149 (GTPPVSSENS…KTKEPSLEPK (123 aa)) constitute a propeptide that is removed on maturation. A glycan (N-linked (GlcNAc...) asparagine) is linked at asparagine 152. The 503-residue stretch at 154–656 (TWVINALQFI…HGLVNVTKSW (503 aa)) folds into the Peptidase S8 domain. Aspartate 179 functions as the Charge relay system in the catalytic mechanism. N-linked (GlcNAc...) asparagine glycans are attached at residues asparagine 222, asparagine 228, asparagine 240, asparagine 257, asparagine 262, asparagine 298, and asparagine 327. The active-site Charge relay system is histidine 365. Residue asparagine 406 is glycosylated (N-linked (GlcNAc...) asparagine). Serine 590 (charge relay system) is an active-site residue. N-linked (GlcNAc...) asparagine glycosylation is found at asparagine 651, asparagine 663, asparagine 739, asparagine 792, asparagine 893, asparagine 908, asparagine 917, asparagine 929, asparagine 1048, asparagine 1056, asparagine 1084, asparagine 1117, asparagine 1133, asparagine 1140, asparagine 1148, asparagine 1208, asparagine 1233, asparagine 1237, and asparagine 1332.

The protein belongs to the peptidase S8 family. Post-translationally, LWM pyrolysin seems to be produced by autoproteolytic activation of HMW pyrolysin. Glycosylated.

The protein localises to the cell envelope. In terms of biological role, has endopeptidase activity toward caseins, casein fragments including alpha-S1-casein and synthetic peptides. The chain is Pyrolysin (pls) from Pyrococcus furiosus (strain ATCC 43587 / DSM 3638 / JCM 8422 / Vc1).